The following is a 301-amino-acid chain: Glycine--tRNA ligase alpha subunit (301 aa).

Belongs to the class-II aminoacyl-tRNA synthetase family. As to quaternary structure, tetramer of two alpha and two beta subunits.

Its subcellular location is the cytoplasm. The enzyme catalyses tRNA(Gly) + glycine + ATP = glycyl-tRNA(Gly) + AMP + diphosphate. The chain is Glycine--tRNA ligase alpha subunit from Shewanella baltica (strain OS223).